Here is a 369-residue protein sequence, read N- to C-terminus: tRNA pseudouridine synthase D (369 aa).

Asp80 (nucleophile) is an active-site residue. The TRUD domain occupies 156–318; sequence GIPNWFGEQR…LKQERRALRL (163 aa).

It belongs to the pseudouridine synthase TruD family.

It catalyses the reaction uridine(13) in tRNA = pseudouridine(13) in tRNA. Functionally, responsible for synthesis of pseudouridine from uracil-13 in transfer RNAs. This Xanthomonas axonopodis pv. citri (strain 306) protein is tRNA pseudouridine synthase D.